A 146-amino-acid polypeptide reads, in one-letter code: 1,4-dihydroxy-2-naphthoyl-CoA hydrolase (146 aa).

Residue aspartate 19 is part of the active site.

It belongs to the 4-hydroxybenzoyl-CoA thioesterase family. DHNA-CoA hydrolase subfamily.

The enzyme catalyses 1,4-dihydroxy-2-naphthoyl-CoA + H2O = 1,4-dihydroxy-2-naphthoate + CoA + H(+). The protein operates within cofactor biosynthesis; phylloquinone biosynthesis. Its pathway is quinol/quinone metabolism; 1,4-dihydroxy-2-naphthoate biosynthesis; 1,4-dihydroxy-2-naphthoate from chorismate: step 7/7. Its function is as follows. Catalyzes the hydrolysis of 1,4-dihydroxy-2-naphthoyl-CoA (DHNA-CoA) to 1,4-dihydroxy-2-naphthoate (DHNA), a reaction involved in phylloquinone (vitamin K1) biosynthesis. The polypeptide is 1,4-dihydroxy-2-naphthoyl-CoA hydrolase (Thermosynechococcus vestitus (strain NIES-2133 / IAM M-273 / BP-1)).